We begin with the raw amino-acid sequence, 323 residues long: GDP-mannose 4,6-dehydratase (323 aa).

NADP(+) is bound by residues 11 to 14 (TGQD), Arg36, 59 to 60 (DM), and 81 to 85 (LAAQS). Thr126 is an active-site residue. Catalysis depends on nucleophile residues Glu128 and Tyr150. NADP(+) contacts are provided by Lys154, His180, and Arg185.

Belongs to the NAD(P)-dependent epimerase/dehydratase family. GDP-mannose 4,6-dehydratase subfamily. As to quaternary structure, homotetramer. NADP(+) serves as cofactor.

It carries out the reaction GDP-alpha-D-mannose = GDP-4-dehydro-alpha-D-rhamnose + H2O. It participates in bacterial outer membrane biogenesis; lipopolysaccharide biosynthesis. Functionally, catalyzes the conversion of GDP-D-mannose to GDP-4-dehydro-6-deoxy-D-mannose. In Pseudomonas aeruginosa (strain ATCC 15692 / DSM 22644 / CIP 104116 / JCM 14847 / LMG 12228 / 1C / PRS 101 / PAO1), this protein is GDP-mannose 4,6-dehydratase.